The following is a 120-amino-acid chain: Large ribosomal subunit protein uL18 (120 aa).

Belongs to the universal ribosomal protein uL18 family. Part of the 50S ribosomal subunit; part of the 5S rRNA/L5/L18/L25 subcomplex. Contacts the 5S and 23S rRNAs.

This is one of the proteins that bind and probably mediate the attachment of the 5S RNA into the large ribosomal subunit, where it forms part of the central protuberance. In Agrobacterium fabrum (strain C58 / ATCC 33970) (Agrobacterium tumefaciens (strain C58)), this protein is Large ribosomal subunit protein uL18.